Reading from the N-terminus, the 602-residue chain is Transcription factor COE4 (602 aa).

Positions 64–67 (RKSN) are interaction with DNA. The C5-type zinc finger occupies 152-171 (CRVLLTHEIMCSRCCDRKSC). 2 interaction with DNA regions span residues 198–205 (NCLKNAGN) and 237–240 (NNSK). The IPT/TIG domain occupies 256 to 338 (PCIKAISPGE…CKGCPGRFVY (83 aa)). Disordered stretches follow at residues 448–476 (PEPGYARSCSSASPRGFAPSPGSQQSGYG) and 558–602 (PVLR…LAYS). The span at 560–569 (LRPPSSPPQA) shows a compositional bias: pro residues.

It belongs to the COE family. Forms either a homodimer or a heterodimer with a related family member. Interacts with MAPK3/ERK1. Interacts with STAT5A. Most highly expressed in cytotoxic NK cells, especially CD16(+) NK cells, followed by CD8(+) T-cells.

The protein localises to the nucleus. Functionally, transcription factor. Binds to specific sequence motif 5'-CCCNNG[GA]G-3' in regulatory elements of putative target immunoregulatory genes such as NKG7, GZMA, and TBX21. Positively modulates transcription of NKG7. May play a role in regulating FAS/CD95-mediated apoptosis in cytotoxic NK cells and T-cells, probably downstream of interleukin IL2 signaling. The sequence is that of Transcription factor COE4 (EBF4) from Homo sapiens (Human).